Reading from the N-terminus, the 177-residue chain is Large ribosomal subunit protein uL6 (177 aa).

This sequence belongs to the universal ribosomal protein uL6 family. Part of the 50S ribosomal subunit.

Its function is as follows. This protein binds to the 23S rRNA, and is important in its secondary structure. It is located near the subunit interface in the base of the L7/L12 stalk, and near the tRNA binding site of the peptidyltransferase center. This chain is Large ribosomal subunit protein uL6, found in Histophilus somni (strain 2336) (Haemophilus somnus).